Consider the following 393-residue polypeptide: Putative cytochrome P450 143 (393 aa).

Cys-342 is a binding site for heme.

This sequence belongs to the cytochrome P450 family. It depends on heme as a cofactor.

The protein is Putative cytochrome P450 143 (cyp143) of Mycobacterium bovis (strain ATCC BAA-935 / AF2122/97).